Here is a 40-residue protein sequence, read N- to C-terminus: Large ribosomal subunit protein bL36B (40 aa).

The protein belongs to the bacterial ribosomal protein bL36 family.

This Streptomyces coelicolor (strain ATCC BAA-471 / A3(2) / M145) protein is Large ribosomal subunit protein bL36B.